Here is a 96-residue protein sequence, read N- to C-terminus: MQVLVRDNNVDQALRVLKKKMQREGIFREMKQRKAYEKPSVRKAREKAEAVRRARKQARKTAIREGLIAAPKPKARPVSPRRPAAPAPASSPVGAA.

A disordered region spans residues 52–96 (RRARKQARKTAIREGLIAAPKPKARPVSPRRPAAPAPASSPVGAA). Residues 69–96 (AAPKPKARPVSPRRPAAPAPASSPVGAA) show a composition bias toward low complexity.

The protein belongs to the bacterial ribosomal protein bS21 family.

This chain is Small ribosomal subunit protein bS21, found in Methylobacterium nodulans (strain LMG 21967 / CNCM I-2342 / ORS 2060).